We begin with the raw amino-acid sequence, 427 residues long: Glutamyl-tRNA reductase (427 aa).

Substrate-binding positions include 49 to 52, S105, 110 to 112, and Q116; these read TCNR and EPQ. Catalysis depends on C50, which acts as the Nucleophile. Residue 185-190 coordinates NADP(+); the sequence is AAGEMN.

Belongs to the glutamyl-tRNA reductase family. In terms of assembly, homodimer.

It catalyses the reaction (S)-4-amino-5-oxopentanoate + tRNA(Glu) + NADP(+) = L-glutamyl-tRNA(Glu) + NADPH + H(+). The protein operates within porphyrin-containing compound metabolism; protoporphyrin-IX biosynthesis; 5-aminolevulinate from L-glutamyl-tRNA(Glu): step 1/2. Functionally, catalyzes the NADPH-dependent reduction of glutamyl-tRNA(Glu) to glutamate 1-semialdehyde (GSA). This is Glutamyl-tRNA reductase from Acinetobacter baumannii (strain AB307-0294).